The chain runs to 990 residues: Fibronectin-binding protein A (990 aa).

The N-terminal stretch at Met1–Ala35 is a signal peptide. The YSIRK-G/S signaling motif motif lies at Tyr7–Ser18. Disordered stretches follow at residues Lys33–Gln61 and Pro96–Lys193. Positions Thr37–Asn55 are enriched in polar residues. The interval Thr37 to Asn511 is ligand-binding A region. 2 stretches are compositionally biased toward basic and acidic residues: residues Thr112–Val126 and Asp179–Lys193. The fibrinogen/elastin/tropoelastin-binding stretch occupies residues Gly194–Asn511. The interval Gly512 to Thr834 is fibronectin-binding. The stretch at Glu545–Ile574 is one B-1 repeat. The segment at Glu545–Ser604 is 2 X approximate tandem repeats. One copy of the B-2 repeat lies at Glu575 to Ser604. The tract at residues Leu702–Phe969 is disordered. The D-1 repeat unit spans residues Gly707–Gln744. The interval Gly707–Thr850 is 4 X approximate tandem repeats. The span at Pro741–Ser752 shows a compositional bias: polar residues. One copy of the D-2 repeat lies at Gly745–His782. Residues Gly783 to Ser821 form a D-3 repeat. Positions Lys786–Pro800 are enriched in basic and acidic residues. A D-4; truncated repeat occupies Gly822–Thr850. The segment covering Pro836–Pro910 has biased composition (pro residues). WR repeat units lie at residues Pro851–Thr864, Pro865–Thr878, Pro879–Thr892, Pro893–Lys906, and Pro907–Lys920. Residues Pro851–Lys920 are 5 X tandem repeats, Pro-rich (WR). Positions Leu954–Gly958 match the LPXTG sorting signal motif. Residue Thr957 is modified to Pentaglycyl murein peptidoglycan amidated threonine. Residues Gly958–Ala990 constitute a propeptide, removed by sortase.

It is found in the secreted. Its subcellular location is the cell wall. In terms of biological role, promotes bacterial attachment to multiple substrates, such as fibronectin (Fn), fibrinogen (Fg), elastin peptides and tropoelastin. This confers to S.aureus the ability to invade endothelial cells. Promotes adherence to and aggregation of activated platelets. This Staphylococcus aureus (strain bovine RF122 / ET3-1) protein is Fibronectin-binding protein A (fnbA).